Here is a 150-residue protein sequence, read N- to C-terminus: UPF0178 protein PBPRA1738 (150 aa).

The protein belongs to the UPF0178 family.

The chain is UPF0178 protein PBPRA1738 from Photobacterium profundum (strain SS9).